Here is a 375-residue protein sequence, read N- to C-terminus: Succinyl-diaminopimelate desuccinylase (375 aa).

H66 contacts Zn(2+). Residue D68 is part of the active site. D99 is a Zn(2+) binding site. E133 functions as the Proton acceptor in the catalytic mechanism. Zn(2+) is bound by residues E134, E162, and H348.

Belongs to the peptidase M20A family. DapE subfamily. Homodimer. Zn(2+) serves as cofactor. It depends on Co(2+) as a cofactor.

It carries out the reaction N-succinyl-(2S,6S)-2,6-diaminopimelate + H2O = (2S,6S)-2,6-diaminopimelate + succinate. It participates in amino-acid biosynthesis; L-lysine biosynthesis via DAP pathway; LL-2,6-diaminopimelate from (S)-tetrahydrodipicolinate (succinylase route): step 3/3. Catalyzes the hydrolysis of N-succinyl-L,L-diaminopimelic acid (SDAP), forming succinate and LL-2,6-diaminopimelate (DAP), an intermediate involved in the bacterial biosynthesis of lysine and meso-diaminopimelic acid, an essential component of bacterial cell walls. In Escherichia coli (strain SE11), this protein is Succinyl-diaminopimelate desuccinylase.